We begin with the raw amino-acid sequence, 181 residues long: Putative J domain-containing protein R266 (181 aa).

In terms of domain architecture, J spans 6–70; it reads NYYQILDVDN…LKRLNYDSYL (65 aa).

In Acanthamoeba polyphaga (Amoeba), this protein is Putative J domain-containing protein R266.